A 211-amino-acid chain; its full sequence is MAHTKTRRTYGFLMVLLILGSACGNLVASGSAGSPPSNEPGGGGLSEQVVLDQLSESDLYGNNKRAWQSLQSSWGKRSSSGDVSDPDIYMTGHFVPLVITDGTNTIDWDTFERLASGQSAQQQQQQPLQQQSQSGEDFDDLAGEPDVEKRAWKSMNVAWGKRRQAQGWNKFRGAWGKREPTWNNLKGMWGKRDQWQKLHGGWGKRSQLPSN.

An N-terminal signal peptide occupies residues 1-24; it reads MAHTKTRRTYGFLMVLLILGSACG. Positions 25 to 63 are excised as a propeptide; the sequence is NLVASGSAGSPPSNEPGGGGLSEQVVLDQLSESDLYGNN. Position 74 is a tryptophan amide (Trp-74). The propeptide occupies 78–148; it reads SSSGDVSDPD…DDLAGEPDVE (71 aa). Residues 115–135 show a composition bias toward low complexity; the sequence is ASGQSAQQQQQQPLQQQSQSG. The disordered stretch occupies residues 115 to 142; that stretch reads ASGQSAQQQQQQPLQQQSQSGEDFDDLA. 4 positions are modified to tryptophan amide: Trp-159, Trp-175, Trp-189, and Trp-202. Positions 168 to 190 are disordered; that stretch reads WNKFRGAWGKREPTWNNLKGMWG. A propeptide spanning residues 206–211 is cleaved from the precursor; sequence SQLPSN.

As to expression, in larvae, strongly expressed in the midgut region before and in between the copper cells, and in a group of cells in the posterior part of the larval midgut. Expressed in the neurons of many areas including the subesophageal ganglion/tritocerebrum (SOG), olfactory glomeruli, lateral ventral protocerebrum, mushroom body, the optic lobe medulla and in the antennal lobes.

The protein resides in the secreted. Its function is as follows. Ligand for the sex peptide receptor (SPR). Stabilizes sleep and maintains sleep homeostasis to inhibit the activity of wake-promoting circuits, such as those that involve the pigment dispersing factor (pdf) neurons. Regulated by the circadian clock network and pathways associated with a sleep homeostat. May also have a regulatory role in gut motility. This is Allatostatins MIP (Mip) from Drosophila melanogaster (Fruit fly).